A 734-amino-acid chain; its full sequence is MATKFPKFSQSLSSDPTTRRIWYGIATSHDFEAHDNVTEENLYQKIFASHFGHLAIIFLWTSGNLFHVAWQGNFEAWIANPLKVKPVAHAIWDPHFGQAALKAFSRGGVNYPVDISYSGVYHWWYTIGMRTSSDLYAGALFLLVLAALCMFAGRLHLQPKFKPSISWFKNNESRLNHHLSGLFGLSSLAWCGHLIHVAIPASRGQHIGWNNFLTTPPHPAGLKPFFTGNWSDYSLNPDDPSHIFGTSSNSGKAILTFLGGFHPQTQSLWLTDIAHHHLAIAVIFIIAGHMYRTNFGIGHNIKDILEAHKPPSGKMGLGHKGLFNTISNSLHFQLGLALACLGVLSSLTAQHLYSIPPYAFISRDFVTQAALYTHHQYIAGFLMVGAFAHGAIFFVRDYDPKQNKDNVLYRMLEHKEAIISHLSWVSLFLGFHTLGLYVHNDVVVAFGNPEKQILIEPIFAQWIQATSGKTLYGFNVLLASSSSSATQAAQSLWLPNWLEAINNNNNSLFLTIGPGDFLVHHAIALGLHTTTLILVKGALDARGSKLMPDKKDFGYSFPCDGPGRGGTCDISAWDAFYLGVFWMLNTIGWTTFYWHWKHITIWQGNASQFNESSTYLMGWFRDYLWLNSSPIINGYNPYGMNNLSVWAWMFLFAHLVWATGFMFLISWRGYWQELIESLVWAHERTPLANLITWKDKPVALSIVQARLVGLVHFSVGYVLTYAAFVIASTAGKFN.

Helical transmembrane passes span 46-69 (IFASHFGHLAIIFLWTSGNLFHVA), 135-158 (LYAGALFLLVLAALCMFAGRLHLQ), 175-199 (LNHHLSGLFGLSSLAWCGHLIHVAI), 273-291 (IAHHHLAIAVIFIIAGHMY), 330-353 (LHFQLGLALACLGVLSSLTAQHLY), 369-395 (AALYTHHQYIAGFLMVGAFAHGAIFFV), 417-439 (AIISHLSWVSLFLGFHTLGLYVH), and 517-535 (FLVHHAIALGLHTTTLILV). [4Fe-4S] cluster is bound by residues Cys-559 and Cys-568. 2 helical membrane passes run 575-596 (AFYLGVFWMLNTIGWTTFYWHW) and 643-665 (LSVWAWMFLFAHLVWATGFMFLI). Chlorophyll a contacts are provided by His-654, Met-662, and Tyr-670. Phylloquinone is bound at residue Trp-671. A helical transmembrane segment spans residues 707 to 727 (LVGLVHFSVGYVLTYAAFVIA).

It belongs to the PsaA/PsaB family. The PsaA/B heterodimer binds the P700 chlorophyll special pair and subsequent electron acceptors. PSI consists of a core antenna complex that captures photons, and an electron transfer chain that converts photonic excitation into a charge separation. The eukaryotic PSI reaction center is composed of at least 11 subunits. It depends on P700 is a chlorophyll a/chlorophyll a' dimer, A0 is one or more chlorophyll a, A1 is one or both phylloquinones and FX is a shared 4Fe-4S iron-sulfur center. as a cofactor.

It is found in the plastid. The protein localises to the chloroplast thylakoid membrane. The catalysed reaction is reduced [plastocyanin] + hnu + oxidized [2Fe-2S]-[ferredoxin] = oxidized [plastocyanin] + reduced [2Fe-2S]-[ferredoxin]. In terms of biological role, psaA and PsaB bind P700, the primary electron donor of photosystem I (PSI), as well as the electron acceptors A0, A1 and FX. PSI is a plastocyanin/cytochrome c6-ferredoxin oxidoreductase, converting photonic excitation into a charge separation, which transfers an electron from the donor P700 chlorophyll pair to the spectroscopically characterized acceptors A0, A1, FX, FA and FB in turn. Oxidized P700 is reduced on the lumenal side of the thylakoid membrane by plastocyanin or cytochrome c6. This Cyanidium caldarium (Red alga) protein is Photosystem I P700 chlorophyll a apoprotein A2.